A 498-amino-acid polypeptide reads, in one-letter code: MRIDPTTSGSGVSTLEKKKPGRVVQIIGPVLDVAFPPGKMPNIYNALVVQGRDSVGQPINVACEVQQLLGNNRVRAVAMSATDGLTRGMEVIDTGAPISVPVGGATLGRIFNVLGEPVDNLGPVDTSTTSPIHRSAPAFIQLDTKLSIFETGIKVVDLLAPYRRGGKIGLFGGAGVGKTVLIMELINNIAKAHGGVSVFGGVGERTREGNDLYMEMKESGVINEENIAESKVALVYGQMNEPPGARMRVGLTALTMAEYFRDVNEQDVLLFIDNIFRFVQAGSEVSALLGRMPSAVGYQPTLSTEMGSLQERITSTKEGSITSIQAVYVPADDLTDPAPATTFAHLDATTVLSRGLDAKGIYPAVDPLDSTSTMLQPRIVGEEHYETAQRVKQTLQRYKELQDIIAILGLDELSEEDRLLVARARKIERFLSQPFFVAEVFTGSPGKYVGLAETIRGFQLILSGELDGLPEQAFYLVGNIDEATAKAMNLEMESNLKK.

Residue glycine 172–threonine 179 participates in ATP binding.

Belongs to the ATPase alpha/beta chains family. As to quaternary structure, F-type ATPases have 2 components, CF(1) - the catalytic core - and CF(0) - the membrane proton channel. CF(1) has five subunits: alpha(3), beta(3), gamma(1), delta(1), epsilon(1). CF(0) has four main subunits: a(1), b(1), b'(1) and c(9-12).

The protein localises to the plastid. It localises to the chloroplast thylakoid membrane. The catalysed reaction is ATP + H2O + 4 H(+)(in) = ADP + phosphate + 5 H(+)(out). Functionally, produces ATP from ADP in the presence of a proton gradient across the membrane. The catalytic sites are hosted primarily by the beta subunits. The chain is ATP synthase subunit beta, chloroplastic from Nicotiana sp. (Tobacco).